The primary structure comprises 533 residues: Peptide chain release factor 3 (533 aa).

In terms of domain architecture, tr-type G spans 9-284; sequence ARRRTFAIIS…ALCELSPPPL (276 aa). GTP-binding positions include 18 to 25, 95 to 99, and 149 to 152; these read SHPDAGKT, DTPGH, and NKLD.

It belongs to the TRAFAC class translation factor GTPase superfamily. Classic translation factor GTPase family. PrfC subfamily.

The protein localises to the cytoplasm. Functionally, increases the formation of ribosomal termination complexes and stimulates activities of RF-1 and RF-2. It binds guanine nucleotides and has strong preference for UGA stop codons. It may interact directly with the ribosome. The stimulation of RF-1 and RF-2 is significantly reduced by GTP and GDP, but not by GMP. The sequence is that of Peptide chain release factor 3 from Cupriavidus necator (strain ATCC 17699 / DSM 428 / KCTC 22496 / NCIMB 10442 / H16 / Stanier 337) (Ralstonia eutropha).